Here is a 236-residue protein sequence, read N- to C-terminus: Enolase-phosphatase E1 (236 aa).

The protein belongs to the HAD-like hydrolase superfamily. MasA/MtnC family. Monomer. The cofactor is Mg(2+).

The enzyme catalyses 5-methylsulfanyl-2,3-dioxopentyl phosphate + H2O = 1,2-dihydroxy-5-(methylsulfanyl)pent-1-en-3-one + phosphate. The protein operates within amino-acid biosynthesis; L-methionine biosynthesis via salvage pathway; L-methionine from S-methyl-5-thio-alpha-D-ribose 1-phosphate: step 3/6. Its pathway is amino-acid biosynthesis; L-methionine biosynthesis via salvage pathway; L-methionine from S-methyl-5-thio-alpha-D-ribose 1-phosphate: step 4/6. Bifunctional enzyme that catalyzes the enolization of 2,3-diketo-5-methylthiopentyl-1-phosphate (DK-MTP-1-P) into the intermediate 2-hydroxy-3-keto-5-methylthiopentenyl-1-phosphate (HK-MTPenyl-1-P), which is then dephosphorylated to form the acireductone 1,2-dihydroxy-3-keto-5-methylthiopentene (DHK-MTPene). The protein is Enolase-phosphatase E1 of Frankia alni (strain DSM 45986 / CECT 9034 / ACN14a).